The sequence spans 642 residues: Nocturnin (642 aa).

The interval 50–87 (LEDDDKPPQLFSVTDEPPSPNEEDYKPPNHHEDDGKLA) is disordered. Basic and acidic residues predominate over residues 72–87 (EDYKPPNHHEDDGKLA). Position 363 (Glu-363) interacts with Mg(2+). Residues Glu-363, Asn-430, 453–456 (HLKA), 491–493 (DFN), and His-600 contribute to the substrate site. The segment at 611–642 (PPTENGKESGSGSGSDGENETEVEGSKHGSIQ) is disordered.

The protein belongs to the CCR4/nocturin family. Associates to the CCR4-NOT complex composed of at least Pop2/Caf1-55, Ccr4, Not1, Rga/Not2, and Not3. Mg(2+) serves as cofactor. Expressed in the head, in the dorsal neurons DN3, a subgroup of clock neurons (at protein level). Ubiquitously expressed in both males and females.

It is found in the cytoplasm. The catalysed reaction is NADP(+) + H2O = phosphate + NAD(+). It carries out the reaction NADPH + H2O = phosphate + NADH. Phosphatase which catalyzes the conversion of NADP(+) to NAD(+) and of NADPH to NADH. Shows a small preference for NADPH over NADP(+). Because of its association with the CCR4-NOT complex, has a role in mRNA deadenylation and decay. Required at the pupal stage for proper wing morphogenesis after eclosion. Its function is as follows. Doesn't have a role in light-mediated behavioral response. Functionally, in dorsal neurons, contributes to the light-mediated behavioral response. The sequence is that of Nocturnin from Drosophila melanogaster (Fruit fly).